Consider the following 259-residue polypeptide: Flagellar L-ring protein 1 (259 aa).

The first 15 residues, 1-15, serve as a signal peptide directing secretion; it reads MKRICLLALITTMSG. Cys16 carries the N-palmitoyl cysteine lipid modification. Residue Cys16 is the site of S-diacylglycerol cysteine attachment. Residues 38–63 are disordered; the sequence is EGDKSKDESSGIVDTLRGRNDPVAGD.

It belongs to the FlgH family. In terms of assembly, the basal body constitutes a major portion of the flagellar organelle and consists of four rings (L,P,S, and M) mounted on a central rod.

It localises to the cell outer membrane. It is found in the bacterial flagellum basal body. Assembles around the rod to form the L-ring and probably protects the motor/basal body from shearing forces during rotation. In Vibrio parahaemolyticus serotype O3:K6 (strain RIMD 2210633), this protein is Flagellar L-ring protein 1 (flgH1).